The primary structure comprises 371 residues: Bifunctional enzyme IspD/IspF (371 aa).

The tract at residues 1–212 is 2-C-methyl-D-erythritol 4-phosphate cytidylyltransferase; the sequence is MKDITLVLLA…FDFTPASGTI (212 aa). Residues 213–371 are 2-C-methyl-D-erythritol 2,4-cyclodiphosphate synthase; that stretch reads FTGNGFDVHA…NLGYFDWRKF (159 aa). Aspartate 219 and histidine 221 together coordinate a divalent metal cation. 4-CDP-2-C-methyl-D-erythritol 2-phosphate-binding positions include 219–221 and 245–246; these read DVH and HS. Histidine 253 is an a divalent metal cation binding site. 4-CDP-2-C-methyl-D-erythritol 2-phosphate contacts are provided by residues 267–269, 272–276, 341–344, phenylalanine 348, and arginine 351; these read DIG, FPDTD, and STTE.

This sequence in the N-terminal section; belongs to the IspD/TarI cytidylyltransferase family. IspD subfamily. It in the C-terminal section; belongs to the IspF family. A divalent metal cation serves as cofactor.

It carries out the reaction 2-C-methyl-D-erythritol 4-phosphate + CTP + H(+) = 4-CDP-2-C-methyl-D-erythritol + diphosphate. The catalysed reaction is 4-CDP-2-C-methyl-D-erythritol 2-phosphate = 2-C-methyl-D-erythritol 2,4-cyclic diphosphate + CMP. The protein operates within isoprenoid biosynthesis; isopentenyl diphosphate biosynthesis via DXP pathway; isopentenyl diphosphate from 1-deoxy-D-xylulose 5-phosphate: step 2/6. It participates in isoprenoid biosynthesis; isopentenyl diphosphate biosynthesis via DXP pathway; isopentenyl diphosphate from 1-deoxy-D-xylulose 5-phosphate: step 4/6. In terms of biological role, bifunctional enzyme that catalyzes the formation of 4-diphosphocytidyl-2-C-methyl-D-erythritol from CTP and 2-C-methyl-D-erythritol 4-phosphate (MEP) (IspD), and catalyzes the conversion of 4-diphosphocytidyl-2-C-methyl-D-erythritol 2-phosphate (CDP-ME2P) to 2-C-methyl-D-erythritol 2,4-cyclodiphosphate (ME-CPP) with a corresponding release of cytidine 5-monophosphate (CMP) (IspF). This is Bifunctional enzyme IspD/IspF from Campylobacter hominis (strain ATCC BAA-381 / DSM 21671 / CCUG 45161 / LMG 19568 / NCTC 13146 / CH001A).